Here is a 374-residue protein sequence, read N- to C-terminus: Eukaryotic translation initiation factor 3 subunit M (374 aa).

A PCI domain is found at glutamate 180–histidine 339.

This sequence belongs to the eIF-3 subunit M family. Component of the eukaryotic translation initiation factor 3 (eIF-3) complex, which is composed of 13 subunits: eif3a, eif3b, eif3c, eif3d, eif3e, eif3f, eif3g, eif3h, eif3i, eif3j, eif3k, eif3l and eif3m.

The protein resides in the cytoplasm. In terms of biological role, component of the eukaryotic translation initiation factor 3 (eIF-3) complex, which is involved in protein synthesis of a specialized repertoire of mRNAs and, together with other initiation factors, stimulates binding of mRNA and methionyl-tRNAi to the 40S ribosome. The eIF-3 complex specifically targets and initiates translation of a subset of mRNAs involved in cell proliferation. The polypeptide is Eukaryotic translation initiation factor 3 subunit M (eif3m) (Xenopus laevis (African clawed frog)).